A 551-amino-acid chain; its full sequence is Crossover junction endonuclease EME1B (551 aa).

Disordered stretches follow at residues 1–55 (MNDH…PIFV) and 187–239 (TTLP…RLEK). The segment covering 37 to 51 (SDPTPQKQPPESSFT) has biased composition (polar residues). Residues 202-239 (SKEDKTSAMEEKKLRKEQERLEKAASKAEEAERKRLEK) are compositionally biased toward basic and acidic residues. Positions 203 to 253 (KEDKTSAMEEKKLRKEQERLEKAASKAEEAERKRLEKEKKKWEKGKLALKS) form a coiled coil. One can recognise an ERCC4 domain in the interval 287 to 484 (NPIERSIVWT…PSMKSLLKVY (198 aa)).

It belongs to the EME1/MMS4 family. As to quaternary structure, forms a heterodimer with MUS81. Mg(2+) serves as cofactor. Ca(2+) is required as a cofactor.

It localises to the nucleus. In terms of biological role, interacts with MUS81 to form a DNA structure-specific endonuclease with substrate preference for branched DNA structures with a 5'-end at the branch nick. Typical substrates include 3'-flap structures, D-loops, replication forks, nicked Holliday junctions and also intact Holliday junctions with a reduced efficiency. May be required in mitosis for the processing of stalled or collapsed replication fork intermediates. Plays a role in DNA repair and in genotoxic stress-induced homologous recombination (HR) in somatic cells. Mediates a subset of meiotic recombination events that are insensitive to crossover interference. The polypeptide is Crossover junction endonuclease EME1B (EME1B) (Arabidopsis thaliana (Mouse-ear cress)).